A 295-amino-acid polypeptide reads, in one-letter code: Glutamyl-Q tRNA(Asp) synthetase (295 aa).

Residues 6–10 (RFAPS) and Glu-42 contribute to the L-glutamate site. A 'HIGH' region motif is present at residues 9–19 (PSPTGAMHLGN). Residues Cys-93, Cys-95, Tyr-118, and Cys-122 each coordinate Zn(2+). 2 residues coordinate L-glutamate: Tyr-177 and Arg-195. The short motif at 233 to 237 (RLAKR) is the 'KMSKS' region element. Lys-236 contacts ATP.

The protein belongs to the class-I aminoacyl-tRNA synthetase family. GluQ subfamily. It depends on Zn(2+) as a cofactor.

Functionally, catalyzes the tRNA-independent activation of glutamate in presence of ATP and the subsequent transfer of glutamate onto a tRNA(Asp). Glutamate is transferred on the 2-amino-5-(4,5-dihydroxy-2-cyclopenten-1-yl) moiety of the queuosine in the wobble position of the QUC anticodon. The polypeptide is Glutamyl-Q tRNA(Asp) synthetase (Deinococcus radiodurans (strain ATCC 13939 / DSM 20539 / JCM 16871 / CCUG 27074 / LMG 4051 / NBRC 15346 / NCIMB 9279 / VKM B-1422 / R1)).